The primary structure comprises 92 residues: Small ribosomal subunit protein uS19 (92 aa).

Belongs to the universal ribosomal protein uS19 family.

In terms of biological role, protein S19 forms a complex with S13 that binds strongly to the 16S ribosomal RNA. The sequence is that of Small ribosomal subunit protein uS19 from Borreliella afzelii (strain PKo) (Borrelia afzelii).